A 190-amino-acid polypeptide reads, in one-letter code: Inner membrane-spanning protein YciB (190 aa).

Transmembrane regions (helical) follow at residues 22-42 (IYVATGALIVATAIQIVLTFA), 50-70 (MQLITFAMVAIFGGMTIFLHD), 76-96 (WKVTIVYAIFAIGLAVSHAMG), 118-138 (INWAWVAFFSFCAGLNVYVAF), and 148-168 (FKVFGLLIATFAYMIATGFYI).

Belongs to the YciB family.

Its subcellular location is the cell inner membrane. In terms of biological role, plays a role in cell envelope biogenesis, maintenance of cell envelope integrity and membrane homeostasis. In Vibrio campbellii (strain ATCC BAA-1116), this protein is Inner membrane-spanning protein YciB.